Here is a 78-residue protein sequence, read N- to C-terminus: MNIQETVLNILEDITGTDEVVNNQDIQLFEEGLLDSLATVQLLVEIEGQLGIQVPVSDFDREVWGTPKQIIQQVEALQ.

The region spanning Met1–Gln78 is the Carrier domain. An O-(pantetheine 4'-phosphoryl)serine modification is found at Ser36.

The protein belongs to the DltC family. In terms of processing, 4'-phosphopantetheine is transferred from CoA to a specific serine of apo-DCP.

It localises to the cytoplasm. Its pathway is cell wall biogenesis; lipoteichoic acid biosynthesis. Functionally, carrier protein involved in the D-alanylation of lipoteichoic acid (LTA). The loading of thioester-linked D-alanine onto DltC is catalyzed by D-alanine--D-alanyl carrier protein ligase DltA. The DltC-carried D-alanyl group is further transferred to cell membrane phosphatidylglycerol (PG) by forming an ester bond, probably catalyzed by DltD. D-alanylation of LTA plays an important role in modulating the properties of the cell wall in Gram-positive bacteria, influencing the net charge of the cell wall. The chain is D-alanyl carrier protein from Enterococcus faecalis (strain ATCC 700802 / V583).